The chain runs to 158 residues: Large ribosomal subunit protein uL16 (158 aa).

Belongs to the universal ribosomal protein uL16 family. As to quaternary structure, part of the 50S ribosomal subunit.

In terms of biological role, binds 23S rRNA and is also seen to make contacts with the A and possibly P site tRNAs. The chain is Large ribosomal subunit protein uL16 from Parasynechococcus marenigrum (strain WH8102).